A 559-amino-acid chain; its full sequence is Probable D-2-hydroxyglutarate dehydrogenase, mitochondrial (559 aa).

The N-terminal 80 residues, 1–80, are a transit peptide targeting the mitochondrion; it reads MARRAAAGLL…MNFEVQKRSF (80 aa). The 180-residue stretch at 131–310 folds into the FAD-binding PCMH-type domain; sequence YKGSSQLLLL…TKIAILTPAK (180 aa).

This sequence belongs to the FAD-binding oxidoreductase/transferase type 4 family. As to quaternary structure, homodimer. FAD is required as a cofactor.

The protein localises to the mitochondrion. The enzyme catalyses (R)-2-hydroxyglutarate + A = 2-oxoglutarate + AH2. Catalyzes the oxidation of D-2-hydroxyglutarate to alpha-ketoglutarate. The chain is Probable D-2-hydroxyglutarate dehydrogenase, mitochondrial (D2HGDH) from Oryza sativa subsp. indica (Rice).